Consider the following 139-residue polypeptide: Large ribosomal subunit protein uL16 (139 aa).

Belongs to the universal ribosomal protein uL16 family. Part of the 50S ribosomal subunit.

Functionally, binds 23S rRNA and is also seen to make contacts with the A and possibly P site tRNAs. In Parvibaculum lavamentivorans (strain DS-1 / DSM 13023 / NCIMB 13966), this protein is Large ribosomal subunit protein uL16.